The chain runs to 521 residues: CDP-diacylglycerol--glycerol-3-phosphate 3-phosphatidyltransferase (521 aa).

91-98 (ASLYLGKS) is a binding site for ATP. 2 PLD phosphodiesterase domains span residues 177–203 (GLGL…SNDY) and 419–457 (NGWS…TRRA). Active-site residues include histidine 182, lysine 184, and aspartate 189.

Belongs to the CDP-alcohol phosphatidyltransferase class-II family.

Its subcellular location is the mitochondrion. The catalysed reaction is a CDP-1,2-diacyl-sn-glycerol + sn-glycerol 3-phosphate = a 1,2-diacyl-sn-glycero-3-phospho-(1'-sn-glycero-3'-phosphate) + CMP + H(+). It participates in phospholipid metabolism; phosphatidylglycerol biosynthesis; phosphatidylglycerol from CDP-diacylglycerol: step 1/2. Its function is as follows. Essential for the viability of mitochondrial petite mutant. Catalyzes the committed step to the synthesis of the acidic phospholipids. In Saccharomyces cerevisiae (strain ATCC 204508 / S288c) (Baker's yeast), this protein is CDP-diacylglycerol--glycerol-3-phosphate 3-phosphatidyltransferase (PGS1).